Reading from the N-terminus, the 520-residue chain is Cobyric acid synthase (520 aa).

Residues 254–465 (ELDIAVVRLP…IHGILDNDGL (212 aa)) form the GATase cobBQ-type domain. Residue Cys-335 is the Nucleophile of the active site. Residue His-457 is part of the active site.

It belongs to the CobB/CobQ family. CobQ subfamily.

It functions in the pathway cofactor biosynthesis; adenosylcobalamin biosynthesis. Its function is as follows. Catalyzes amidations at positions B, D, E, and G on adenosylcobyrinic A,C-diamide. NH(2) groups are provided by glutamine, and one molecule of ATP is hydrogenolyzed for each amidation. The protein is Cobyric acid synthase of Sorangium cellulosum (strain So ce56) (Polyangium cellulosum (strain So ce56)).